The sequence spans 246 residues: 5'-nucleotidase SurE (246 aa).

A divalent metal cation contacts are provided by Asp-8, Asp-9, Ser-39, and Asn-91.

Belongs to the SurE nucleotidase family. It depends on a divalent metal cation as a cofactor.

It localises to the cytoplasm. It catalyses the reaction a ribonucleoside 5'-phosphate + H2O = a ribonucleoside + phosphate. Nucleotidase that shows phosphatase activity on nucleoside 5'-monophosphates. The polypeptide is 5'-nucleotidase SurE (Dechloromonas aromatica (strain RCB)).